Here is a 90-residue protein sequence, read N- to C-terminus: Acylphosphatase (90 aa).

The Acylphosphatase-like domain occupies 4–90 (CVRVRVSGRV…KGHDDFKIIY (87 aa)). Catalysis depends on residues Arg-19 and Asn-37.

It belongs to the acylphosphatase family.

It carries out the reaction an acyl phosphate + H2O = a carboxylate + phosphate + H(+). The sequence is that of Acylphosphatase (acyP) from Methanothrix thermoacetophila (strain DSM 6194 / JCM 14653 / NBRC 101360 / PT) (Methanosaeta thermophila).